The primary structure comprises 80 residues: MMKLMLFSIIVILFSLIGSIHGADVPGNYPLDSSDDTYLCAPLGENPSCIQICRKHGVKYGYCYAFQCWCEYLEDKNVKI.

The signal sequence occupies residues 1–22; that stretch reads MMKLMLFSIIVILFSLIGSIHG. Residues 25–80 form the LCN-type CS-alpha/beta domain; the sequence is VPGNYPLDSSDDTYLCAPLGENPSCIQICRKHGVKYGYCYAFQCWCEYLEDKNVKI. 3 disulfide bridges follow: Cys40-Cys63, Cys49-Cys68, and Cys53-Cys70.

Belongs to the long (3 C-C) scorpion toxin superfamily. Sodium/Potassium channel inhibitor family. As to expression, expressed by the venom gland.

The protein resides in the secreted. In terms of biological role, weakly inhibits the vertebrate potassium channel Kv1.1/KCNA1. This Androctonus australis (Sahara scorpion) protein is Beta-toxin KAaH2.